Reading from the N-terminus, the 539-residue chain is Cytochrome P450 monooxygenase buaD (539 aa).

Positions 1-16 (MLVPVLTLLGTLTATG) are cleaved as a signal peptide. Asn120 carries an N-linked (GlcNAc...) asparagine glycan. Cys478 is a heme binding site. Residue Asn520 is glycosylated (N-linked (GlcNAc...) asparagine).

Belongs to the cytochrome P450 family. Heme serves as cofactor.

The protein operates within mycotoxin biosynthesis. In terms of biological role, cytochrome P450 monooxygenase; part of the gene cluster that mediates the biosynthesis of burnettramic acids, an unusual class of bolaamphiphilic pyrrolizidinediones that display potent antibacterial, antifungal, and cytotoxic activities. The first step of the biosynthesis of burnettramic acids is the hydroxylation of proline by the proline hydroxylase buaE to generate 4-hydroxyproline. The PKS-NRPS buaA and trans-enoyl reductase buaC construct the highly reduced polyketide chain, and the condensation (C) domain of buaA then catalyzes the amide bond formation with the activated 4-hydroxyproline. This is followed by the R domain releasing the nascent polyketide-peptide directly via a Dieckmann condensation to afford a tetramic acid fused to the hydroxyproline, generating the bicyclic pyrrolidinedione moiety. The cytochrome P450 monooxygenases buaD and buaG are likely responsible for the multiple hydroxylations on the polyketide chain and its terminus, although in the heterologous context, buaD does not appear to be required. Therefore, while buaG may be a multifunctional cytochrome P450 monooxygenase, it cannot be ruled out that the two secondary alcohols on the polyketide chain could have an acetate origin. Finally, the glycosyltransferase buaB transfers beta-D-mannose to the aglycone burnettramic acid A to form burnettramic acid A. Burnettramic acid B is a minor cis-pyrrolizidine epimer of burnettramic acid A and it is likely that small amounts of it form naturally in acidic environments. In Petromyces alliaceus (Aspergillus alliaceus), this protein is Cytochrome P450 monooxygenase buaD.